A 313-amino-acid polypeptide reads, in one-letter code: Biotin synthase (313 aa).

The 231-residue stretch at 28-258 (NFGNDIELCS…LFPQARLRLS (231 aa)) folds into the Radical SAM core domain. Cys46, Cys50, and Cys53 together coordinate [4Fe-4S] cluster. [2Fe-2S] cluster contacts are provided by Cys90, Cys121, Cys181, and Arg256.

It belongs to the radical SAM superfamily. Biotin synthase family. In terms of assembly, homodimer. It depends on [4Fe-4S] cluster as a cofactor. [2Fe-2S] cluster is required as a cofactor.

It carries out the reaction (4R,5S)-dethiobiotin + (sulfur carrier)-SH + 2 reduced [2Fe-2S]-[ferredoxin] + 2 S-adenosyl-L-methionine = (sulfur carrier)-H + biotin + 2 5'-deoxyadenosine + 2 L-methionine + 2 oxidized [2Fe-2S]-[ferredoxin]. It participates in cofactor biosynthesis; biotin biosynthesis; biotin from 7,8-diaminononanoate: step 2/2. Catalyzes the conversion of dethiobiotin (DTB) to biotin by the insertion of a sulfur atom into dethiobiotin via a radical-based mechanism. In Francisella tularensis subsp. tularensis (strain FSC 198), this protein is Biotin synthase.